Consider the following 827-residue polypeptide: Leucine--tRNA ligase (827 aa).

The 'HIGH' region motif lies at 42–52 (PYPSGKLHMGH). Residues 581 to 585 (KMSKS) carry the 'KMSKS' region motif. Lys584 contributes to the ATP binding site.

The protein belongs to the class-I aminoacyl-tRNA synthetase family.

Its subcellular location is the cytoplasm. The catalysed reaction is tRNA(Leu) + L-leucine + ATP = L-leucyl-tRNA(Leu) + AMP + diphosphate. This chain is Leucine--tRNA ligase, found in Desulforamulus reducens (strain ATCC BAA-1160 / DSM 100696 / MI-1) (Desulfotomaculum reducens).